The sequence spans 591 residues: Isocitrate dehydrogenase kinase/phosphatase (591 aa).

ATP-binding positions include 322 to 328 (APGIRGL) and lysine 343. Residue aspartate 378 is part of the active site.

The protein belongs to the AceK family.

It localises to the cytoplasm. The catalysed reaction is L-seryl-[isocitrate dehydrogenase] + ATP = O-phospho-L-seryl-[isocitrate dehydrogenase] + ADP + H(+). Its function is as follows. Bifunctional enzyme which can phosphorylate or dephosphorylate isocitrate dehydrogenase (IDH) on a specific serine residue. This is a regulatory mechanism which enables bacteria to bypass the Krebs cycle via the glyoxylate shunt in response to the source of carbon. When bacteria are grown on glucose, IDH is fully active and unphosphorylated, but when grown on acetate or ethanol, the activity of IDH declines drastically concomitant with its phosphorylation. The protein is Isocitrate dehydrogenase kinase/phosphatase of Aromatoleum aromaticum (strain DSM 19018 / LMG 30748 / EbN1) (Azoarcus sp. (strain EbN1)).